The chain runs to 231 residues: Chlorophyll a-b binding protein 1B-20, chloroplastic (231 aa).

A disordered region spans residues 1 to 25 (RIQAYRFRTRVPPSPAASGSPRSTR). A chloroplast-targeting transit peptide spans 1–31 (RIQAYRFRTRVPPSPAASGSPRSTRRDVAVQ). Trp-36 contributes to the chlorophyll b binding site. Residue Phe-56 coordinates chlorophyll a. Positions 80, 118, 133, and 136 each coordinate chlorophyll b. 6 residues coordinate chlorophyll a: Lys-182, Glu-183, Asn-186, Arg-188, Gln-200, and His-215. Residues 183–199 (ELANGRLAMLAFLGFLV) form a helical membrane-spanning segment.

The protein belongs to the light-harvesting chlorophyll a/b-binding (LHC) protein family. As to quaternary structure, the LHC complex consists of chlorophyll a-b binding proteins. It depends on Binds at least 14 chlorophylls (8 Chl-a and 6 Chl-b) and carotenoids such as lutein and neoxanthin. as a cofactor. Photoregulated by reversible phosphorylation of its threonine residues.

The protein localises to the plastid. It is found in the chloroplast thylakoid membrane. Its function is as follows. The light-harvesting complex (LHC) functions as a light receptor, it captures and delivers excitation energy to photosystems with which it is closely associated. This is Chlorophyll a-b binding protein 1B-20, chloroplastic (LHC Ib-20) from Hordeum vulgare (Barley).